A 1464-amino-acid polypeptide reads, in one-letter code: Secretory phospholipase A2 receptor (1464 aa).

An N-terminal signal peptide occupies residues 1–22; the sequence is MLLSPSLLLPLLLLLGAPRGCA. Residues 23–1398 lie on the Extracellular side of the membrane; the sequence is EGVAAALTPE…ELPEKGPSHS (1376 aa). In terms of domain architecture, Ricin B-type lectin spans 40 to 163; it reads KGIFVIQSES…GSGGGDICEY (124 aa). Cystine bridges form between C53/C66, C91/C108, C180/C206, C194/C221, C262/C356, C332/C348, C408/C503, C480/C495, C619/C636, C701/C798, C776/C790, C842/C939, C916/C931, C1069/C1089, C1211/C1225, C1282/C1378, and C1356/C1370. A glycan (N-linked (GlcNAc...) asparagine) is linked at N95. A Fibronectin type-II domain is found at 175 to 223; that stretch reads AHGMPCMFPFQYNHQWHHECTREGREDDLLWCATTSRYERDEKWGFCPD. 8 C-type lectin domains span residues 240 to 357, 387 to 504, 524 to 645, 675 to 799, 821 to 940, 967 to 1098, 1123 to 1234, and 1259 to 1379; these read NSHI…YVCK, YNRN…YVCK, HGGF…MSLC, GLAS…WICK, YQDA…SICK, FNYK…GFVC, YGNR…GAIC, and FKSN…FICK. N456 carries an N-linked (GlcNAc...) asparagine glycan. Residues 1399–1419 traverse the membrane as a helical segment; the sequence is IIPLAVVLTLIVIVAICTLSF. Residues 1420–1464 are Cytoplasmic-facing; it reads CIYKHNGGFFRRLAGFRNPYYPATNFSTVHLEENILISDLEKSDQ. An Endocytosis signal motif is present at residues 1437 to 1443; that stretch reads NPYYPAT.

In terms of assembly, interacts with sPLA2-IB/PLA2G1B; this interaction mediates intracellular signaling as well as clearance of extracellular sPLA2-IB/PLA2G1B via endocytotic pathway. Interacts with sPLA2-X/PLA2G10; this interaction mediates sPLA2-X/PLA2G10 clearance and inactivation. Post-translationally, the secretory phospholipase A2 receptor form may be produced by the action of metalloproteinases. It contains all extracellular domains and only lacks transmembrane and cytosolic regions. It is however unclear whether this form is produced by proteolytic cleavage as suggested by some experiments, or by alternative splicing.

The protein resides in the cell membrane. Its subcellular location is the secreted. Receptor for secretory phospholipase A2 (sPLA2). Also able to bind to snake PA2-like toxins. Although its precise function remains unclear, binding of sPLA2 to its receptor participates in both positive and negative regulation of sPLA2 functions as well as clearance of sPLA2. Binding of sPLA2-IB/PLA2G1B induces various effects depending on the cell type, such as activation of the mitogen-activated protein kinase (MAPK) cascade to induce cell proliferation, the production of lipid mediators, selective release of arachidonic acid in bone marrow-derived mast cells. In neutrophils, binding of sPLA2-IB/PLA2G1B can activate p38 MAPK to stimulate elastase release and cell adhesion. May be involved in responses in pro-inflammatory cytokine productions during endotoxic shock. Also has endocytic properties and rapidly internalizes sPLA2 ligands, which is particularly important for the clearance of extracellular sPLA2s to protect their potent enzymatic activities. The soluble secretory phospholipase A2 receptor form is circulating and acts as a negative regulator of sPLA2 functions by blocking the biological functions of sPLA2-IB/PLA2G1B and sPLA2-X/PLA2G10. The polypeptide is Secretory phospholipase A2 receptor (PLA2R1) (Pongo abelii (Sumatran orangutan)).